A 355-amino-acid polypeptide reads, in one-letter code: Syntaxin-5 (355 aa).

At 1–333 (MIPRKRYGSK…KYFQSVTSNR (333 aa)) the chain is on the cytoplasmic side. The short motif at 245-247 (IDM) is the IxM motif; signal for cargo packaging into COPII-coated vesicles element. The t-SNARE coiled-coil homology domain occupies 263-325 (DSYIQSRADT…EAAHSEILKY (63 aa)). A coiled-coil region spans residues 287–318 (FQQLAHMVKEQEETIQRIDENVLGAQLDVEAA). A helical; Anchor for type IV membrane protein transmembrane segment spans residues 334-354 (WLMVKIFLILIVFFIIFVVFL). Residue Ala355 is a topological domain, vesicular.

It belongs to the syntaxin family. As to quaternary structure, part of a ternary complex containing STX5A, NSFL1C and VCP. Part of a unique SNARE complex composed of the Golgi SNAREs GOSR1, GOSR2 and YKT6. This complex also includes VTI1A. Component of a SNARE complex consisting of STX5, YKT6, GOSR1 and BET1L. Interacts with BET1L. Interacts with BET1. Interacts with COG4. Interacts with GM130/GOLGA2. Interacts (via IxM motif) with SEC24C and SEC24D; mediates STX5 packaging into COPII-coated vesicles. Interacts with VLDLR; this interaction mediates VLDLR translocation from the endoplasmic reticulum to the plasma membrane. As to expression, expressed in the brain, heart, spleen, lung, liver, kidney and testis.

Its subcellular location is the endoplasmic reticulum-Golgi intermediate compartment membrane. It is found in the golgi apparatus membrane. Mediates endoplasmic reticulum to Golgi transport. Together with p115/USO1 and GM130/GOLGA2, involved in vesicle tethering and fusion at the cis-Golgi membrane to maintain the stacked and inter-connected structure of the Golgi apparatus. Functionally, required for Golgi to endoplasmic reticulum retrogade transport, and for intra-Golgi transport. The chain is Syntaxin-5 (Stx5) from Rattus norvegicus (Rat).